A 120-amino-acid polypeptide reads, in one-letter code: MDISIQCISYHTSLSKDRCSFEIGYLEYFYYISITNITILNLKVEYPKILEIHTITSQLLPKYSPPWFDIIKAPYGNKIPGIVMLFKCISISRILVSLLHYPYARRYAIVFVPSSSYSVN.

This is an uncharacterized protein from Saccharomyces cerevisiae (strain ATCC 204508 / S288c) (Baker's yeast).